The chain runs to 316 residues: ATP synthase gamma chain (316 aa).

This sequence belongs to the ATPase gamma chain family. F-type ATPases have 2 components, CF(1) - the catalytic core - and CF(0) - the membrane proton channel. CF(1) has five subunits: alpha(3), beta(3), gamma(1), delta(1), epsilon(1). CF(0) has three main subunits: a, b and c.

The protein localises to the cellular thylakoid membrane. Functionally, produces ATP from ADP in the presence of a proton gradient across the membrane. The gamma chain is believed to be important in regulating ATPase activity and the flow of protons through the CF(0) complex. The protein is ATP synthase gamma chain of Synechococcus sp. (strain ATCC 27144 / PCC 6301 / SAUG 1402/1) (Anacystis nidulans).